The primary structure comprises 259 residues: Ribosomal RNA small subunit methyltransferase A (259 aa).

Asparagine 13, leucine 15, glycine 39, glutamate 60, aspartate 84, and asparagine 101 together coordinate S-adenosyl-L-methionine.

It belongs to the class I-like SAM-binding methyltransferase superfamily. rRNA adenine N(6)-methyltransferase family. RsmA subfamily.

It is found in the cytoplasm. It carries out the reaction adenosine(1518)/adenosine(1519) in 16S rRNA + 4 S-adenosyl-L-methionine = N(6)-dimethyladenosine(1518)/N(6)-dimethyladenosine(1519) in 16S rRNA + 4 S-adenosyl-L-homocysteine + 4 H(+). Specifically dimethylates two adjacent adenosines (A1518 and A1519) in the loop of a conserved hairpin near the 3'-end of 16S rRNA in the 30S particle. May play a critical role in biogenesis of 30S subunits. The chain is Ribosomal RNA small subunit methyltransferase A from Mesomycoplasma hyopneumoniae (strain 232) (Mycoplasma hyopneumoniae).